Here is an 85-residue protein sequence, read N- to C-terminus: Cell division topological specificity factor (85 aa).

The protein belongs to the MinE family.

In terms of biological role, prevents the cell division inhibition by proteins MinC and MinD at internal division sites while permitting inhibition at polar sites. This ensures cell division at the proper site by restricting the formation of a division septum at the midpoint of the long axis of the cell. This is Cell division topological specificity factor from Cellvibrio japonicus (strain Ueda107) (Pseudomonas fluorescens subsp. cellulosa).